Consider the following 390-residue polypeptide: Aspartate carbamoyltransferase, chloroplastic (390 aa).

A chloroplast-targeting transit peptide spans 1–68; the sequence is MSIASSLTSA…NLTRNVGPVR (68 aa). Carbamoyl phosphate contacts are provided by R136 and T137. 2 residues coordinate UMP: R136 and T137. L-aspartate is bound at residue K166. 3 residues coordinate carbamoyl phosphate: R187, H215, and Q218. Residues R187 and H215 each coordinate UMP. The UMP site is built by R248 and R310. The L-aspartate site is built by R248 and R310. L350 and P351 together coordinate carbamoyl phosphate.

The protein belongs to the aspartate/ornithine carbamoyltransferase superfamily. ATCase family. In terms of assembly, homotrimer.

Its subcellular location is the plastid. It is found in the chloroplast. The catalysed reaction is carbamoyl phosphate + L-aspartate = N-carbamoyl-L-aspartate + phosphate + H(+). It participates in pyrimidine metabolism; UMP biosynthesis via de novo pathway; (S)-dihydroorotate from bicarbonate: step 2/3. Its activity is regulated as follows. Feedback inhibited by UMP. Catalyzes the condensation of carbamoyl phosphate and aspartate to form carbamoyl aspartate and inorganic phosphate, the committed step in the de novo pyrimidine nucleotide biosynthesis pathway. This is Aspartate carbamoyltransferase, chloroplastic (PYRB) from Arabidopsis thaliana (Mouse-ear cress).